We begin with the raw amino-acid sequence, 1654 residues long: Microtubule cross-linking factor 2 (1654 aa).

The disordered stretch occupies residues 1–188 (METPAGESSA…VAASSVGSSR (188 aa)). Residues 55-66 (GSATACGTASSA) show a composition bias toward low complexity. A compositionally biased stretch (pro residues) spans 102–113 (GTGPRPPPPPPS). The segment covering 132 to 147 (LGLELALSSDAESAAG) has biased composition (low complexity). Residues 209-238 (PGGLVRELEELRSENDYLKDEIEELRAEML) form a required for association with Golgi apparatus membrane region. Coiled coils occupy residues 216 to 279 (LEEL…AERR), 308 to 349 (SMRL…LQTE), 448 to 546 (LKLV…YRSE), 816 to 843 (IKDLQLVLAEAHDSLRGLQEQLSQERQL), and 1079 to 1113 (SQEKLQLVERLQGEKQQVEQQVKELQNRLSQLQKA). The disordered stretch occupies residues 348–379 (TELDRPREHSLKKRGTRSLGKTDKKPTAQEDS). Residues 1122 to 1145 (SDMEKQDNSWKEARSEKTHDKEGV) are compositionally biased toward basic and acidic residues. Residues 1122-1146 (SDMEKQDNSWKEARSEKTHDKEGVS) form a disordered region. 2 positions are modified to phosphoserine: Ser1165 and Ser1251. Residues 1406–1505 (LVSVRSKQIS…HSGSTESVWK (100 aa)) are KR-rich domain required for microtubules binding. Disordered stretches follow at residues 1427-1450 (RPCCSPKYGSPKLQRRSVSKLDST), 1537-1560 (PTTAAGEESCKKPEPLSPASYHQP), and 1627-1654 (NTIRHSPSKCRLHPSESGWGGEERAAPQ). The segment covering 1628–1638 (TIRHSPSKCRL) has biased composition (basic residues).

The protein belongs to the MTCL family. In terms of assembly, interacts with CLASP2. Interacts with CLASP1. The C-terminal SOGA 25 kDa form occurs as a monomer. In terms of processing, proteolytically cleaved into a C-terminal SOGA 25 kDa form that is detected in plasma. Proteolytically cleaved in primary hepatocytes into a C-terminal SOGA 80 kDa form. Post-translationally, phosphorylated during mitosis in a CDK1-dependent manner. As to expression, expressed in liver (at protein level).

It localises to the secreted. It is found in the cytoplasm. The protein resides in the cytoskeleton. Its subcellular location is the golgi apparatus membrane. The protein localises to the midbody. In terms of biological role, microtubule-associated factor that enables integration of the centrosomal and Golgi-associated microtubules on the Golgi membrane, supporting directional migration. Preferentially acts on the perinuclear microtubules accumulated around the Golgi. Associates with the Golgi membrane through the N-terminal coiled-coil region and directly binds microtubules through the C-terminal domain. Required for faithful chromosome segregation during mitosis. Regulates autophagy by playing a role in the reduction of glucose production in an adiponectin- and insulin-dependent manner. This is Microtubule cross-linking factor 2 (Mtcl2) from Mus musculus (Mouse).